The sequence spans 251 residues: Cell division protein ZapD (251 aa).

This sequence belongs to the ZapD family. In terms of assembly, interacts with FtsZ.

It localises to the cytoplasm. Cell division factor that enhances FtsZ-ring assembly. Directly interacts with FtsZ and promotes bundling of FtsZ protofilaments, with a reduction in FtsZ GTPase activity. The polypeptide is Cell division protein ZapD (Burkholderia ambifaria (strain MC40-6)).